We begin with the raw amino-acid sequence, 538 residues long: BTB/POZ domain-containing protein 6 (538 aa).

The signal sequence occupies residues 1–17 (MLLPLACLHGRVAQCLT). 2 disordered regions span residues 29-53 (PRRG…PPAK) and 76-115 (AAVG…SPGW). The segment covering 35–53 (ARGAASTGAEAAPAAPPAK) has biased composition (low complexity). The span at 85–103 (RSPPSAPAPAPPPPAPAPP) shows a compositional bias: pro residues. Positions 136 to 206 (ADVHFVVGPP…MYSDEIDLEA (71 aa)) constitute a BTB domain.

In terms of tissue distribution, expressed in lens.

It localises to the cytoplasm. Adapter protein for the cul3 E3 ubiquitin-protein ligase complex. Involved in late neuronal development and muscle formation. The sequence is that of BTB/POZ domain-containing protein 6 from Homo sapiens (Human).